Reading from the N-terminus, the 248-residue chain is MLLIPAIDLKDGQCVRLKQGDMDQATVFSEDPAAMARHWVNQGARRLHLVDLNGAFVGKPRNEAAIKAIIAEVGDEIPVQLGGGIRDLNTIERWLDDGLSYVIIGTAAVKNPGFLKDACSAFGGHIIVGLDAKDGKVATDGWSKLTGHEVADLARKYEDYGVEAIIYTDIGRDGMLQGINIDATVKLAQSMSIPVIASGGLSNLADIDNLCAVENEGVEGVICGRAIYSGDLNFTDAQARADKLSNGE.

Aspartate 8 serves as the catalytic Proton acceptor. Catalysis depends on aspartate 131, which acts as the Proton donor.

This sequence belongs to the HisA/HisF family.

It is found in the cytoplasm. It carries out the reaction 1-(5-phospho-beta-D-ribosyl)-5-[(5-phospho-beta-D-ribosylamino)methylideneamino]imidazole-4-carboxamide = 5-[(5-phospho-1-deoxy-D-ribulos-1-ylimino)methylamino]-1-(5-phospho-beta-D-ribosyl)imidazole-4-carboxamide. It participates in amino-acid biosynthesis; L-histidine biosynthesis; L-histidine from 5-phospho-alpha-D-ribose 1-diphosphate: step 4/9. This chain is 1-(5-phosphoribosyl)-5-[(5-phosphoribosylamino)methylideneamino] imidazole-4-carboxamide isomerase, found in Cupriavidus pinatubonensis (strain JMP 134 / LMG 1197) (Cupriavidus necator (strain JMP 134)).